A 358-amino-acid polypeptide reads, in one-letter code: MAEQEPKELLEMSTDTERLLEENDLRPLWEVEKDFGNQFGGFEADIWKWEDIQASIDAIERDVPIADLPPGFQRRVAVPVNTGYRNAISNTIYVGVQTVSPGETAPAHRHGANALRFTIDGSEDMKTVVAGEEFPMRDNDLITTPQWEWHDHVNDGDETAAWLDVLDLPLVLDSLNARNTFENHELDRQPVTKSQGYWESQYGRARPFEDTKEDGIPGPFEGNCAATPPYRFSWKDTLQTLRQRAENDDPDPHDGYSLSYVNPATGQPPLFPTMSFRAQLLQEETDPHFHNAVDAYFVIEGEGATHVGDDVLEWSERDIFVIPPDEIHHHDPDGEAILLGMTDRPVFEAFNFYAEAEP.

One can recognise a Cupin type-1 domain in the interval 239-358; that stretch reads QTLRQRAEND…AFNFYAEAEP (120 aa).

This sequence belongs to the gentisate 1,2-dioxygenase family. As to quaternary structure, homotetramer.

The catalysed reaction is 2,5-dihydroxybenzoate + O2 = 3-maleylpyruvate + H(+). It participates in aromatic compound metabolism; naphthalene degradation. Inhibited by 2,2'-dipyridyl. Functionally, catalyzes the oxygen-dependent ring fission of gentisate between the carboxyl and proximal hydroxyl groups at positions 1 and 2 of the aromatic ring to form maleylpyruvate. No activity with cathechol and protecatechuate as substrates. Part of a 3-hydroxybenzoic acid-degradation pathway. This is Gentisate 1,2-dioxygenase (gdoA) from Haloferax sp.